A 175-amino-acid chain; its full sequence is Large ribosomal subunit protein uL10 (175 aa).

The protein belongs to the universal ribosomal protein uL10 family. As to quaternary structure, part of the ribosomal stalk of the 50S ribosomal subunit. The N-terminus interacts with L11 and the large rRNA to form the base of the stalk. The C-terminus forms an elongated spine to which L12 dimers bind in a sequential fashion forming a multimeric L10(L12)X complex.

Forms part of the ribosomal stalk, playing a central role in the interaction of the ribosome with GTP-bound translation factors. This is Large ribosomal subunit protein uL10 from Methylobacterium nodulans (strain LMG 21967 / CNCM I-2342 / ORS 2060).